Here is a 612-residue protein sequence, read N- to C-terminus: Probable methyltransferase PMT9 (612 aa).

The Cytoplasmic portion of the chain corresponds to 1–14; it reads MKHFRTERVRATPK. The chain crosses the membrane as a helical; Signal-anchor for type II membrane protein span at residues 15–35; that stretch reads LFTYVLVGFIALLGLTCLYYG. Residues 36–612 are Lumenal-facing; it reads SSFAPGSRKS…LWSLPAISVS (577 aa). Residues Asn-107, Asn-383, and Asn-562 are each glycosylated (N-linked (GlcNAc...) asparagine).

The protein belongs to the methyltransferase superfamily.

It is found in the golgi apparatus membrane. This chain is Probable methyltransferase PMT9, found in Arabidopsis thaliana (Mouse-ear cress).